A 736-amino-acid chain; its full sequence is Elongation factor 2 (736 aa).

A tr-type G domain is found at 18–261; the sequence is EQIRNIGITA…MVVKHIPNPR (244 aa). GTP is bound by residues 27–34, 93–97, and 147–150; these read AHVDHGKT, DTPGH, and NKID. Residue His-602 is modified to Diphthamide.

Belongs to the TRAFAC class translation factor GTPase superfamily. Classic translation factor GTPase family. EF-G/EF-2 subfamily.

It localises to the cytoplasm. Its function is as follows. Catalyzes the GTP-dependent ribosomal translocation step during translation elongation. During this step, the ribosome changes from the pre-translocational (PRE) to the post-translocational (POST) state as the newly formed A-site-bound peptidyl-tRNA and P-site-bound deacylated tRNA move to the P and E sites, respectively. Catalyzes the coordinated movement of the two tRNA molecules, the mRNA and conformational changes in the ribosome. This is Elongation factor 2 from Desulfurococcus amylolyticus (strain DSM 18924 / JCM 16383 / VKM B-2413 / 1221n) (Desulfurococcus kamchatkensis).